The primary structure comprises 719 residues: Protein STRUBBELIG-RECEPTOR FAMILY 6 (719 aa).

The N-terminal stretch at 1-29 is a signal peptide; that stretch reads MRENWAVVALFTLCIVGFELRFIHGATDA. The Extracellular portion of the chain corresponds to 30 to 293; sequence SDTSALNTLF…SKKSGIGAGA (264 aa). LRR repeat units follow at residues 97-118, 119-140, 143-164, 167-190, 191-213, and 214-234; these read SLTE…QFPP, NLQR…SLSQ, PLKY…DFSK, SLTT…SSLT, SLKS…AGLP, and LETL…SLKG. Residues 242 to 287 form a disordered region; sequence NSFNTGPAPPPPPGTPPIRGSPSRKSGGRESRSSDESTRNGDSKKS. A compositionally biased stretch (pro residues) spans 248–257; sequence PAPPPPPGTP. The span at 268 to 286 shows a compositional bias: basic and acidic residues; that stretch reads GGRESRSSDESTRNGDSKK. A helical membrane pass occupies residues 294–314; the sequence is IAGIIISLLVVTALLVAFFLF. Residues 315–719 lie on the Cytoplasmic side of the membrane; it reads RRKKSKRSSP…GSADTTSDYM (405 aa). 2 disordered regions span residues 322 to 355 and 364 to 383; these read SSPM…SSVE and SINL…DEDS. Residues 332–354 show a composition bias toward polar residues; it reads NQPFTLASNDFHENNSIQSSSSV. Residue serine 377 is modified to Phosphoserine. The region spanning 416–690 is the Protein kinase domain; that stretch reads FSVDNLLGEG…SEVVQALVVL (275 aa). ATP is bound by residues 422 to 430 and lysine 444; that span reads LGEGTFGRV. The segment at 700 to 719 is disordered; it reads TVGVDPSQRAGSADTTSDYM. Residues 708 to 719 show a composition bias toward polar residues; that stretch reads RAGSADTTSDYM.

It belongs to the protein kinase superfamily. Ser/Thr protein kinase family. Expressed in seedlings, roots, stems, leaves, flowers and siliques.

Its subcellular location is the membrane. In Arabidopsis thaliana (Mouse-ear cress), this protein is Protein STRUBBELIG-RECEPTOR FAMILY 6 (SRF6).